The primary structure comprises 438 residues: Polycomb protein eed-A (438 aa).

Positions 1–67 (MSEASGRAAG…NAPGRKAWGK (67 aa)) are disordered. Positions 40 to 57 (SIESGTNTERPDTPTNAA) are enriched in polar residues. 7 WD repeats span residues 88–131 (DHNQ…DIRL), 139–182 (DADE…CIKH), 185–225 (GHGN…LVAI), 231–270 (GHRD…MKTA), 301–338 (IHRN…DDID), 356–396 (SQCD…PHKA), and 405–438 (KCAS…DRLR).

It belongs to the WD repeat ESC family. As to quaternary structure, component of the prc2/eed-ezh2 complex. Interacts with yy1. Can interact with ezh2, hdac1 and taf9.

It localises to the nucleus. Functionally, polycomb group (PcG) protein. Component of the prc2/eed-ezh2 complex, which methylates 'Lys-9' and 'Lys-27' of histone H3, leading to transcriptional repression of the affected target gene. The polypeptide is Polycomb protein eed-A (eed-a) (Xenopus laevis (African clawed frog)).